Here is a 944-residue protein sequence, read N- to C-terminus: Isoleucine--tRNA ligase (944 aa).

A 'HIGH' region motif is present at residues 58–68; it reads PYANGSIHIGH. L-isoleucyl-5'-AMP is bound at residue glutamate 563. Residues 604–608 carry the 'KMSKS' region motif; that stretch reads KMSKS. Residue lysine 607 coordinates ATP. Residues cysteine 907, cysteine 910, cysteine 927, and cysteine 930 each coordinate Zn(2+).

The protein belongs to the class-I aminoacyl-tRNA synthetase family. IleS type 1 subfamily. Monomer. The cofactor is Zn(2+).

It is found in the cytoplasm. It catalyses the reaction tRNA(Ile) + L-isoleucine + ATP = L-isoleucyl-tRNA(Ile) + AMP + diphosphate. In terms of biological role, catalyzes the attachment of isoleucine to tRNA(Ile). As IleRS can inadvertently accommodate and process structurally similar amino acids such as valine, to avoid such errors it has two additional distinct tRNA(Ile)-dependent editing activities. One activity is designated as 'pretransfer' editing and involves the hydrolysis of activated Val-AMP. The other activity is designated 'posttransfer' editing and involves deacylation of mischarged Val-tRNA(Ile). This chain is Isoleucine--tRNA ligase, found in Salmonella choleraesuis (strain SC-B67).